Here is a 37-residue protein sequence, read N- to C-terminus: Defensin-A (37 aa).

Cystine bridges form between cysteine 4/cysteine 25, cysteine 10/cysteine 33, and cysteine 14/cysteine 35.

The protein resides in the secreted. Functionally, has antibacterial activity against M.luteus and E.coli. This chain is Defensin-A, found in Mytilus edulis (Blue mussel).